Consider the following 100-residue polypeptide: UPF0235 protein NE0395 (100 aa).

Belongs to the UPF0235 family.

The sequence is that of UPF0235 protein NE0395 from Nitrosomonas europaea (strain ATCC 19718 / CIP 103999 / KCTC 2705 / NBRC 14298).